We begin with the raw amino-acid sequence, 311 residues long: Prohibitin-2 (311 aa).

A helical membrane pass occupies residues 39 to 57 (GAGMGLAGLVLLGGAAFVA). The AIM signature appears at 141–144 (YRTL).

It belongs to the prohibitin family. As to quaternary structure, the mitochondrial prohibitin complex consists of two subunits (PHB1 and PHB2). The subunits assemble into a membrane-associated ring-shaped supercomplex of approximately 1 mDa. Interacts with ATG24/SNX4; the interaction is direct and plays a role in mitophagy.

It localises to the mitochondrion inner membrane. Its function is as follows. Prohibitin probably acts as a holdase/unfoldase for the stabilization of newly synthesized mitochondrial proteins. Involved in mitophagy. Required for the switch to necrotrophic growth. The chain is Prohibitin-2 from Colletotrichum higginsianum (strain IMI 349063) (Crucifer anthracnose fungus).